Here is a 513-residue protein sequence, read N- to C-terminus: Aspartyl protease family protein 1 (513 aa).

A signal peptide spans 1-21 (MVWYSSCRILFLGLLILLASS). The Peptidase A1 domain maps to 104–445 (HYANVTVGTP…DREKLILGWK (342 aa)). Active-site residues include D122 and D327. Positions 452–488 (GETSARTLPSNRSSSSARPPASSFDPEATNIPSQRPN) are disordered. The span at 455–474 (SARTLPSNRSSSSARPPASS) shows a compositional bias: low complexity. S484 carries GPI-anchor amidated serine lipidation. Positions 485-513 (QRPNTSTTSAAYSLSISLSLFFFSILAIL) are cleaved as a propeptide — removed in mature form.

This sequence belongs to the peptidase A1 family.

Its subcellular location is the cell membrane. Functionally, aspartyl protease. Not able to cleave BAG6. The polypeptide is Aspartyl protease family protein 1 (Arabidopsis thaliana (Mouse-ear cress)).